The primary structure comprises 602 residues: MSLFRLYTRVLELLGKERRLGWTLAVANLLLATAQFAEPVLFGRIIDVMSGNLATGALVPETRSPWPLLAAWVGFGLFTILCSATVALHADRLAHRQRQAVLTSYFEHILQLPLTFHTGTHSGRLMKVMLQGTDALWRVWLGFFREHFAAILSLVVLLPLSLYINWRLAILLFALCGVFTVLTTLVVRKTYGMQNEVEAQYSDLSARASDALGNVALVQSYVRVDAEVQGLRFVADKLLAAQMPVLSWWALVTVITRASTTITVLAIFSLGIALNQQGLTSVGEIVMFVSFATLLIQRLEQVVSFVNSLMMEAPRLQEFITVLDAVPAVRDRPDAIDPGRLSGLVEFLDVSFSYDGKRPAIEDLSFTALPGQTIALVGATGAGKSTAIALLHRAFDPQSGVVKIDGMDVRGLTMSGLRRNIGVVFQEALLFNRSIAENLRVGKPDATDAELRLAAERAQALDFIDRNDLGFDTNAGERGRMLSGGERQRLSIARALLKDPPILILDEATSALDAVTEAKVNLALDEVMKGRTTFVIAHRLSTIRHATRILVFDNGKVIESGTFDELVAQRGRFAELARAQFMVQEEARAAVATATDDAPVRL.

An ABC transmembrane type-1 domain is found at 21–311 (GWTLAVANLL…VVSFVNSLMM (291 aa)). The next 6 helical transmembrane spans lie at 22–42 (WTLA…PVLF), 68–88 (LLAA…TVAL), 146–166 (EHFA…YINW), 167–187 (RLAI…TLVV), 254–274 (VITR…GIAL), and 276–296 (QQGL…TLLI). Residues 345 to 579 (VEFLDVSFSY…RGRFAELARA (235 aa)) form the ABC transporter domain. 378-385 (GATGAGKS) contributes to the ATP binding site.

Belongs to the ABC transporter superfamily. Beta-(1--&gt;2)glucan exporter (TC 3.A.1.108.1) family. As to quaternary structure, homodimer.

It localises to the cell inner membrane. It carries out the reaction [(1-&gt;2)-beta-D-glucosyl](n)(in) + ATP + H2O = [(1-&gt;2)-beta-D-glucosyl](n)(out) + ADP + phosphate + H(+). Functionally, involved in beta-(1--&gt;2)glucan export. Transmembrane domains (TMD) form a pore in the inner membrane and the ATP-binding domain (NBD) is responsible for energy generation. The sequence is that of Beta-(1--&gt;2)glucan export ATP-binding/permease protein NdvA from Rhodopseudomonas palustris (strain BisB5).